A 371-amino-acid polypeptide reads, in one-letter code: Chorismate synthase (371 aa).

2 residues coordinate NADP(+): arginine 48 and arginine 54. FMN is bound by residues 131-133 (RSS), 245-246 (NA), glycine 290, 305-309 (KPTSS), and arginine 331.

It belongs to the chorismate synthase family. In terms of assembly, homotetramer. FMNH2 is required as a cofactor.

The enzyme catalyses 5-O-(1-carboxyvinyl)-3-phosphoshikimate = chorismate + phosphate. The protein operates within metabolic intermediate biosynthesis; chorismate biosynthesis; chorismate from D-erythrose 4-phosphate and phosphoenolpyruvate: step 7/7. Functionally, catalyzes the anti-1,4-elimination of the C-3 phosphate and the C-6 proR hydrogen from 5-enolpyruvylshikimate-3-phosphate (EPSP) to yield chorismate, which is the branch point compound that serves as the starting substrate for the three terminal pathways of aromatic amino acid biosynthesis. This reaction introduces a second double bond into the aromatic ring system. This Mesorhizobium japonicum (strain LMG 29417 / CECT 9101 / MAFF 303099) (Mesorhizobium loti (strain MAFF 303099)) protein is Chorismate synthase.